Reading from the N-terminus, the 113-residue chain is N-alpha-acetyltransferase 38, NatC auxiliary subunit (113 aa).

The interval 1 to 29 is disordered; it reads MAAVLEENGCSRQSSPGAGDSDAEAGDTA. The Sm domain maps to 28-106; it reads TARHKLESLL…IVSIQVELES (79 aa).

Belongs to the snRNP Sm proteins family. Component of the N-terminal acetyltransferase C (NatC) complex.

Its subcellular location is the cytoplasm. The protein resides in the nucleus. Functionally, auxillary component of the N-terminal acetyltransferase C (NatC) complex which catalyzes acetylation of N-terminal methionine residues. N-terminal acetylation protects proteins from ubiquitination and degradation by the N-end rule pathway. The polypeptide is N-alpha-acetyltransferase 38, NatC auxiliary subunit (naa38) (Xenopus tropicalis (Western clawed frog)).